Consider the following 469-residue polypeptide: MKRLSGWDAVLLYSETPNVHMHTLKVAVIELDSDRQEFGVDAFREVIAGRLHKLEPLGYQLVDVPLKFHHPMWREHCQVDLNYHIRPWRLRAPGGRRELDEAVGEIASTPLNRDHPLWEMYFVEGLANHRIAVVAKIHHALADGVASANMMARGMDLLPGPEVGRYVPDPAPTKRQLLSAAFIDHLRHLGRIPATIRYTTQGLGRVRRSSRKLSPALTMPFTPPPTFMNHRLTPERRFATATLALIDVKATAKLLGATINDMVLAMSTGALRTLLLRYDGKAEPLLASVPVSYDFSPERISGNRFTGMLVALPADSDDPLQRVRVCHENAVSAKESHQLLGPELISRWAAYWPPAGAEALFRWLSERDGQNKVLNLNISNVPGPRERGRVGAALVTEIYSVGPLTAGSGLNITVWSYVDQLNISVLTDGSTVQDPHEVTAGMIADFIEIRRAAGLSVELTVVESAMAQA.

The active-site Proton acceptor is H139.

This sequence belongs to the long-chain O-acyltransferase family.

The enzyme catalyses an acyl-CoA + a 1,2-diacyl-sn-glycerol = a triacyl-sn-glycerol + CoA. It participates in glycerolipid metabolism; triacylglycerol biosynthesis. The protein is Putative diacyglycerol O-acyltransferase MT0231 of Mycobacterium tuberculosis (strain CDC 1551 / Oshkosh).